Consider the following 238-residue polypeptide: Protein FEV (238 aa).

The segment at residues 47–127 is a DNA-binding region (ETS); it reads IQLWQFLLEL…HGKRYAYRFD (81 aa). Residues 129 to 238 are may mediate active transcriptional repression; it reads QGLAQACQPP…AASHLGGHYH (110 aa).

The protein belongs to the ETS family. In terms of tissue distribution, in brain, exclusively expressed in the major serotonergic neurons of the dorsal and median raphe nuclei located in the midbrain and pons. Also detected in prostate and small intestine.

Its subcellular location is the nucleus. Its function is as follows. Functions as a transcriptional regulator. According to PubMed:12761502, it functions as a transcriptional repressor. Functions in the differentiation and the maintenance of the central serotonergic neurons. May play a role in cell growth. The sequence is that of Protein FEV (FEV) from Homo sapiens (Human).